Consider the following 600-residue polypeptide: DNA mismatch repair protein MutL (600 aa).

The disordered stretch occupies residues glutamine 348–serine 375. Over residues proline 349–threonine 362 the composition is skewed to polar residues.

The protein belongs to the DNA mismatch repair MutL/HexB family.

Its function is as follows. This protein is involved in the repair of mismatches in DNA. It is required for dam-dependent methyl-directed DNA mismatch repair. May act as a 'molecular matchmaker', a protein that promotes the formation of a stable complex between two or more DNA-binding proteins in an ATP-dependent manner without itself being part of a final effector complex. This Rhizobium leguminosarum bv. trifolii (strain WSM2304) protein is DNA mismatch repair protein MutL.